The following is a 319-amino-acid chain: tRNA N6-adenosine threonylcarbamoyltransferase (319 aa).

Residues histidine 110 and histidine 114 each coordinate Fe cation. Residues 135 to 139 (VVSGG), aspartate 168, glycine 181, aspartate 185, and asparagine 277 each bind substrate. Aspartate 301 is a Fe cation binding site.

Belongs to the KAE1 / TsaD family. The cofactor is Fe(2+).

Its subcellular location is the cytoplasm. The catalysed reaction is L-threonylcarbamoyladenylate + adenosine(37) in tRNA = N(6)-L-threonylcarbamoyladenosine(37) in tRNA + AMP + H(+). In terms of biological role, required for the formation of a threonylcarbamoyl group on adenosine at position 37 (t(6)A37) in tRNAs that read codons beginning with adenine. Is involved in the transfer of the threonylcarbamoyl moiety of threonylcarbamoyl-AMP (TC-AMP) to the N6 group of A37, together with TsaE and TsaB. TsaD likely plays a direct catalytic role in this reaction. The chain is tRNA N6-adenosine threonylcarbamoyltransferase from Mycoplasma pneumoniae (strain ATCC 29342 / M129 / Subtype 1) (Mycoplasmoides pneumoniae).